The primary structure comprises 669 residues: GTP-binding protein 1 (669 aa).

The tract at residues 1-32 (MATERSRSAMDSPVPASMFAPEPSSPGAARAA) is disordered. Serine 6, serine 8, serine 12, serine 24, serine 25, serine 44, serine 47, and serine 69 each carry phosphoserine. Residues 158–389 (FLEVRVAVVG…LNLLSPRTSY (232 aa)) form the tr-type G domain. The interval 167 to 174 (GNVDAGKS) is G1. 167-174 (GNVDAGKS) contributes to the GTP binding site. Residues 206 to 210 (GRTSS) are G2. The tract at residues 252 to 255 (DLAG) is G3. Residues 252–256 (DLAGH) and 308–311 (TKID) contribute to the GTP site. Residues 308 to 311 (TKID) are G4. Residues 366–368 (SNV) are G5. Over residues 573 to 595 (LLQTTNNSPMNSKPQQIKMQSTK) the composition is skewed to polar residues. Residues 573–669 (LLQTTNNSPM…GACVTPASGC (97 aa)) form a disordered region. Residue serine 580 is modified to Phosphoserine. Residues 646–657 (GRRRGGQRHKVK) show a composition bias toward basic residues.

The protein belongs to the TRAFAC class translation factor GTPase superfamily. Classic translation factor GTPase family. GTPBP1 subfamily. In terms of assembly, interacts with EXOSC2/RRP4, EXOSC3/RRP40, EXOSC5/RRP46, HNRNPD, HNRNPR and SYNCRIP. Identified in a complex with AANAT mRNA, but does not bind mRNA by itself.

The protein resides in the cytoplasm. Promotes degradation of target mRNA species. Plays a role in the regulation of circadian mRNA stability. Binds GTP and has GTPase activity. The polypeptide is GTP-binding protein 1 (GTPBP1) (Homo sapiens (Human)).